An 80-amino-acid chain; its full sequence is Small ribosomal subunit protein uS17 (80 aa).

This sequence belongs to the universal ribosomal protein uS17 family. As to quaternary structure, part of the 30S ribosomal subunit.

Its function is as follows. One of the primary rRNA binding proteins, it binds specifically to the 5'-end of 16S ribosomal RNA. This is Small ribosomal subunit protein uS17 from Brucella abortus (strain S19).